We begin with the raw amino-acid sequence, 335 residues long: MNLINEKLDNLENNATKSPKEAVVLLNMGGPNSLYEVGVFLKNMFDDPFILTIKNNFMRKMVGKMIVNSRIEKSKKIYEKLGGKSPLTPITFALTERLNKLDPSRFYTYAMRYTPPYASMVLQDLALKEIESLVFFSMYPQYSSTTTLSSFNDAFNALKSLETFRPKVRVIERFYADKKLNEIILNTILNTLNNRKSQDFVLIFSVHGLPKSVIDAGDTYQQECEHHVSLLKELMQQKNIPFKEVLLSYQSKLGPMKWLEPSTEELIEKHRKSHIIIYPLAFTIDNSETLYELDMQYRLMAERLAIKEYLVCPCLNDSIEFAKFIIGLVKNLKSE.

Residues His207 and Glu288 each contribute to the Fe cation site.

It belongs to the ferrochelatase family.

It localises to the cytoplasm. It catalyses the reaction heme b + 2 H(+) = protoporphyrin IX + Fe(2+). Its pathway is porphyrin-containing compound metabolism; protoheme biosynthesis; protoheme from protoporphyrin-IX: step 1/1. Catalyzes the ferrous insertion into protoporphyrin IX. The sequence is that of Ferrochelatase from Helicobacter pylori (strain HPAG1).